A 496-amino-acid chain; its full sequence is ATP synthase subunit beta, chloroplastic (496 aa).

170-177 (GGAGVGKT) provides a ligand contact to ATP.

The protein belongs to the ATPase alpha/beta chains family. As to quaternary structure, F-type ATPases have 2 components, CF(1) - the catalytic core - and CF(0) - the membrane proton channel. CF(1) has five subunits: alpha(3), beta(3), gamma(1), delta(1), epsilon(1). CF(0) has four main subunits: a(1), b(1), b'(1) and c(9-12).

Its subcellular location is the plastid. It localises to the chloroplast thylakoid membrane. It catalyses the reaction ATP + H2O + 4 H(+)(in) = ADP + phosphate + 5 H(+)(out). Functionally, produces ATP from ADP in the presence of a proton gradient across the membrane. The catalytic sites are hosted primarily by the beta subunits. This Trachycarpus fortunei (Chinese windmill palm) protein is ATP synthase subunit beta, chloroplastic.